A 472-amino-acid polypeptide reads, in one-letter code: ATP synthase subunit beta (472 aa).

149 to 156 contributes to the ATP binding site; the sequence is GGAGVGKT.

Belongs to the ATPase alpha/beta chains family. In terms of assembly, F-type ATPases have 2 components, CF(1) - the catalytic core - and CF(0) - the membrane proton channel. CF(1) has five subunits: alpha(3), beta(3), gamma(1), delta(1), epsilon(1). CF(0) has three main subunits: a(1), b(2) and c(9-12). The alpha and beta chains form an alternating ring which encloses part of the gamma chain. CF(1) is attached to CF(0) by a central stalk formed by the gamma and epsilon chains, while a peripheral stalk is formed by the delta and b chains.

It is found in the cell inner membrane. The catalysed reaction is ATP + H2O + 4 H(+)(in) = ADP + phosphate + 5 H(+)(out). Functionally, produces ATP from ADP in the presence of a proton gradient across the membrane. The catalytic sites are hosted primarily by the beta subunits. The sequence is that of ATP synthase subunit beta from Pelagibacter ubique (strain HTCC1062).